A 647-amino-acid polypeptide reads, in one-letter code: DNA ligase (647 aa).

Residues 30 to 34 (DEEYD), 79 to 80 (SM), and E105 each bind NAD(+). K107 serves as the catalytic N6-AMP-lysine intermediate. Residues R128, E162, and K301 each coordinate NAD(+). C395, C398, C411, and C416 together coordinate Zn(2+). The BRCT domain occupies 570–647 (KSDGVIFGKT…ESAFNELVKE (78 aa)).

Belongs to the NAD-dependent DNA ligase family. LigA subfamily. Mg(2+) is required as a cofactor. Requires Mn(2+) as cofactor.

It carries out the reaction NAD(+) + (deoxyribonucleotide)n-3'-hydroxyl + 5'-phospho-(deoxyribonucleotide)m = (deoxyribonucleotide)n+m + AMP + beta-nicotinamide D-nucleotide.. DNA ligase that catalyzes the formation of phosphodiester linkages between 5'-phosphoryl and 3'-hydroxyl groups in double-stranded DNA using NAD as a coenzyme and as the energy source for the reaction. It is essential for DNA replication and repair of damaged DNA. The polypeptide is DNA ligase (Campylobacter jejuni subsp. jejuni serotype O:6 (strain 81116 / NCTC 11828)).